We begin with the raw amino-acid sequence, 173 residues long: Protein tyrosine phosphatase type IVA 1 (173 aa).

Positions 8–161 (APVEVTYKNM…YRPKMRLRFK (154 aa)) constitute a Tyrosine-protein phosphatase domain. An intrachain disulfide couples Cys49 to Cys104. Asp72 (proton donor) is an active-site residue. Residues 97-132 (GCCIAVHCVAGLGRAPVLVALALIEGGMKYEDAVQF) form an interaction with ATF5 region. The active-site Phosphocysteine intermediate is the Cys104. 105–110 (VAGLGR) provides a ligand contact to phosphate. Arg110 is a binding site for substrate. Cys170 carries the cysteine methyl ester modification. The S-farnesyl cysteine moiety is linked to residue Cys170. The propeptide at 171-173 (CIQ) is removed in mature form.

The protein belongs to the protein-tyrosine phosphatase family. Homotrimer. Interacts with ATF5 and tubulin. Post-translationally, farnesylated. Farnesylation is required for membrane targeting.

It localises to the cell membrane. Its subcellular location is the early endosome. It is found in the endoplasmic reticulum. The protein localises to the cytoplasm. The protein resides in the cytoskeleton. It localises to the spindle. Its subcellular location is the nucleus. The catalysed reaction is O-phospho-L-tyrosyl-[protein] + H2O = L-tyrosyl-[protein] + phosphate. With respect to regulation, inhibited by sodium orthovanadate and pentamidine. In terms of biological role, protein tyrosine phosphatase which stimulates progression from G1 into S phase during mitosis. May play a role in the development and maintenance of differentiating epithelial tissues. The polypeptide is Protein tyrosine phosphatase type IVA 1 (PTP4A1) (Pongo abelii (Sumatran orangutan)).